The following is a 700-amino-acid chain: Polyribonucleotide nucleotidyltransferase (700 aa).

Mg(2+)-binding residues include Asp-484 and Asp-490. The KH domain maps to 551–610 (PRVIRMVVDPEKIREIIGPGGKTISKIIAETGVKIDIEEDGRLYITASDLRSGERAKQMI). The 69-residue stretch at 620–688 (GEIYLGKVLR…KLGRISLSRK (69 aa)) folds into the S1 motif domain.

It belongs to the polyribonucleotide nucleotidyltransferase family. Mg(2+) is required as a cofactor.

It is found in the cytoplasm. The enzyme catalyses RNA(n+1) + phosphate = RNA(n) + a ribonucleoside 5'-diphosphate. Functionally, involved in mRNA degradation. Catalyzes the phosphorolysis of single-stranded polyribonucleotides processively in the 3'- to 5'-direction. This Thermoanaerobacter pseudethanolicus (strain ATCC 33223 / 39E) (Clostridium thermohydrosulfuricum) protein is Polyribonucleotide nucleotidyltransferase.